Consider the following 503-residue polypeptide: ATP synthase subunit alpha (503 aa).

170 to 177 provides a ligand contact to ATP; it reads GDRQTGKT.

It belongs to the ATPase alpha/beta chains family. In terms of assembly, F-type ATPases have 2 components, CF(1) - the catalytic core - and CF(0) - the membrane proton channel. CF(1) has five subunits: alpha(3), beta(3), gamma(1), delta(1), epsilon(1). CF(0) has three main subunits: a(1), b(2) and c(9-12). The alpha and beta chains form an alternating ring which encloses part of the gamma chain. CF(1) is attached to CF(0) by a central stalk formed by the gamma and epsilon chains, while a peripheral stalk is formed by the delta and b chains.

The protein localises to the cell membrane. The enzyme catalyses ATP + H2O + 4 H(+)(in) = ADP + phosphate + 5 H(+)(out). Its function is as follows. Produces ATP from ADP in the presence of a proton gradient across the membrane. The alpha chain is a regulatory subunit. The sequence is that of ATP synthase subunit alpha from Brevibacillus brevis (strain 47 / JCM 6285 / NBRC 100599).